The chain runs to 244 residues: INO80 complex subunit E (244 aa).

The stretch at 10–54 (DYKKKYRNLKRKLKFLIYEHECFQEELRKAQRKLLKVSRDKSFLL) forms a coiled coil. Disordered regions lie at residues 59 to 187 (QYEN…PLTF) and 222 to 244 (FSDA…DIPE). Composition is skewed to low complexity over residues 99–115 (PPLG…LPPS) and 122–136 (ASRA…LASP). The segment covering 157 to 171 (RPKREKRPRLPRKLK) has biased composition (basic residues). Glycyl lysine isopeptide (Lys-Gly) (interchain with G-Cter in SUMO2) cross-links involve residues lysine 159 and lysine 171. Positions 230–244 (DALDGDDDLVIDIPE) are enriched in acidic residues.

As to quaternary structure, component of the chromatin remodeling INO80 complex; specifically part of a complex module associated with the N-terminus of INO80.

It is found in the nucleus. In terms of biological role, putative regulatory component of the chromatin remodeling INO80 complex which is involved in transcriptional regulation, DNA replication and probably DNA repair. The sequence is that of INO80 complex subunit E (INO80E) from Bos taurus (Bovine).